We begin with the raw amino-acid sequence, 145 residues long: Ribosome-binding factor A (145 aa).

Positions 1-10 (MKRPSSHGRR) are enriched in basic residues. 2 disordered regions span residues 1-21 (MKRP…RQLR) and 124-145 (DDPK…KDED).

Belongs to the RbfA family. Monomer. Binds 30S ribosomal subunits, but not 50S ribosomal subunits or 70S ribosomes.

It localises to the cytoplasm. In terms of biological role, one of several proteins that assist in the late maturation steps of the functional core of the 30S ribosomal subunit. Associates with free 30S ribosomal subunits (but not with 30S subunits that are part of 70S ribosomes or polysomes). Required for efficient processing of 16S rRNA. May interact with the 5'-terminal helix region of 16S rRNA. The protein is Ribosome-binding factor A of Phenylobacterium zucineum (strain HLK1).